Consider the following 59-residue polypeptide: uncharacterized protein (59 aa).

This is an uncharacterized protein from Torque teno tupaia virus (isolate Tbc-TTV14).